We begin with the raw amino-acid sequence, 376 residues long: 23S rRNA (uracil(747)-C(5))-methyltransferase RlmC (376 aa).

[4Fe-4S] cluster is bound by residues Cys3, Cys11, Cys14, and Cys87. S-adenosyl-L-methionine-binding residues include Gln212, Phe241, Glu262, and Asn307. Cys334 functions as the Nucleophile in the catalytic mechanism.

This sequence belongs to the class I-like SAM-binding methyltransferase superfamily. RNA M5U methyltransferase family. RlmC subfamily.

The enzyme catalyses uridine(747) in 23S rRNA + S-adenosyl-L-methionine = 5-methyluridine(747) in 23S rRNA + S-adenosyl-L-homocysteine + H(+). In terms of biological role, catalyzes the formation of 5-methyl-uridine at position 747 (m5U747) in 23S rRNA. The protein is 23S rRNA (uracil(747)-C(5))-methyltransferase RlmC of Yersinia pestis bv. Antiqua (strain Antiqua).